We begin with the raw amino-acid sequence, 176 residues long: Ribose 1,5-bisphosphate phosphokinase PhnN (176 aa).

10-17 (GPSGAGKD) lines the ATP pocket.

This sequence belongs to the ribose 1,5-bisphosphokinase family.

The catalysed reaction is alpha-D-ribose 1,5-bisphosphate + ATP = 5-phospho-alpha-D-ribose 1-diphosphate + ADP. It participates in metabolic intermediate biosynthesis; 5-phospho-alpha-D-ribose 1-diphosphate biosynthesis; 5-phospho-alpha-D-ribose 1-diphosphate from D-ribose 5-phosphate (route II): step 3/3. Functionally, catalyzes the phosphorylation of ribose 1,5-bisphosphate to 5-phospho-D-ribosyl alpha-1-diphosphate (PRPP). The protein is Ribose 1,5-bisphosphate phosphokinase PhnN of Methylobacterium radiotolerans (strain ATCC 27329 / DSM 1819 / JCM 2831 / NBRC 15690 / NCIMB 10815 / 0-1).